Reading from the N-terminus, the 113-residue chain is TYRO protein tyrosine kinase-binding protein (113 aa).

The N-terminal stretch at 1–27 (MGGLEPCSRLLLLPLLLAVGGLRPVQA) is a signal peptide. Residues 28–40 (QAQSDCSCSTVSP) are Extracellular-facing. The helical transmembrane segment at 41-61 (GVLAGIVMGDLVLTVLIALAV) threads the bilayer. Asp-50 is a binding site for Ca(2+). Over 62 to 113 (YFLGRLVHRGRGAAEAATRKQRITETESPYQELQGQRSDVYSDLNMQRPYYK) the chain is Cytoplasmic. Positions 75-113 (AEAATRKQRITETESPYQELQGQRSDVYSDLNMQRPYYK) are disordered. Positions 80 to 108 (RKQRITETESPYQELQGQRSDVYSDLNMQ) constitute an ITAM domain. The span at 87 to 100 (TESPYQELQGQRSD) shows a compositional bias: polar residues. Phosphotyrosine is present on residues Tyr-91 and Tyr-102.

The protein belongs to the TYROBP family. In terms of assembly, homodimer; disulfide-linked. Homotrimer; disulfide-linked. Homotetramer; disulfide-linked. Homotrimers and homotetramers form when low levels of partner receptors are available and is competitive with assembly with interacting receptors. They may represent alternative oligomerization states or may be intermediates in the receptor assembly process. Binding of a metal cation aids in homooligomerization through coordination of the metal ion by the subunits of the oligomer. Interacts with TREM1. Interacts with TREM2. Interacts with CLECSF5. Interacts with CD300LB and CD300C2. Interacts with CD300E. Interacts (via ITAM domain) with SYK (via SH2 domains); activates SYK mediating neutrophils and macrophages integrin-mediated activation. Interacts with KLRC2. Interacts with CD300H. Interacts with KLRD1. Interacts with SIGLEC1. Post-translationally, following ligand binding by associated receptors, tyrosine phosphorylated in the ITAM domain which leads to activation of additional tyrosine kinases and subsequent cell activation.

The protein localises to the cell membrane. In terms of biological role, adapter protein which non-covalently associates with activating receptors found on the surface of a variety of immune cells to mediate signaling and cell activation following ligand binding by the receptors. TYROBP is tyrosine-phosphorylated in the ITAM domain following ligand binding by the associated receptors which leads to activation of additional tyrosine kinases and subsequent cell activation. Also has an inhibitory role in some cells. Non-covalently associates with activating receptors of the CD300 family to mediate cell activation. Also mediates cell activation through association with activating receptors of the CD200R family. Required for neutrophil activation mediated by integrin. Required for the activation of myeloid cells mediated by the CLEC5A/MDL1 receptor. Associates with natural killer (NK) cell receptors such as the KLRD1/KLRC2 heterodimer to mediate NK cell activation. Associates with TREM1 to mediate activation of neutrophils and monocytes. Associates with TREM2 on monocyte-derived dendritic cells to mediate up-regulation of chemokine receptor CCR7 and dendritic cell maturation and survival. Association with TREM2 mediates cytokine-induced formation of multinucleated giant cells which are formed by the fusion of macrophages. Stabilizes the TREM2 C-terminal fragment (TREM2-CTF) produced by TREM2 ectodomain shedding which suppresses the release of pro-inflammatory cytokines. In microglia, required with TREM2 for phagocytosis of apoptotic neurons. Required with ITGAM/CD11B in microglia to control production of microglial superoxide ions which promote the neuronal apoptosis that occurs during brain development. Promotes pro-inflammatory responses in microglia following nerve injury which accelerates degeneration of injured neurons. Positively regulates the expression of the IRAK3/IRAK-M kinase and IL10 production by liver dendritic cells and inhibits their T cell allosimulatory ability. Negatively regulates B cell proliferation. Required for CSF1-mediated osteoclast cytoskeletal organization. Positively regulates multinucleation during osteoclast development. The sequence is that of TYRO protein tyrosine kinase-binding protein from Pan troglodytes (Chimpanzee).